A 340-amino-acid chain; its full sequence is Anthranilate phosphoribosyltransferase (340 aa).

5-phospho-alpha-D-ribose 1-diphosphate is bound by residues G82, 85-86 (GD), T90, 92-95 (NIST), 110-118 (KHGSRSVSS), and S122. Residue G82 participates in anthranilate binding. S94 contacts Mg(2+). R168 provides a ligand contact to anthranilate. Mg(2+) contacts are provided by D227 and E228.

This sequence belongs to the anthranilate phosphoribosyltransferase family. In terms of assembly, homodimer. Mg(2+) is required as a cofactor.

It carries out the reaction N-(5-phospho-beta-D-ribosyl)anthranilate + diphosphate = 5-phospho-alpha-D-ribose 1-diphosphate + anthranilate. It participates in amino-acid biosynthesis; L-tryptophan biosynthesis; L-tryptophan from chorismate: step 2/5. Catalyzes the transfer of the phosphoribosyl group of 5-phosphorylribose-1-pyrophosphate (PRPP) to anthranilate to yield N-(5'-phosphoribosyl)-anthranilate (PRA). This Hydrogenovibrio crunogenus (strain DSM 25203 / XCL-2) (Thiomicrospira crunogena) protein is Anthranilate phosphoribosyltransferase.